The following is an 860-amino-acid chain: DNA mismatch repair protein MutS (860 aa).

620-627 (GPNMGGKS) contributes to the ATP binding site.

The protein belongs to the DNA mismatch repair MutS family.

In terms of biological role, this protein is involved in the repair of mismatches in DNA. It is possible that it carries out the mismatch recognition step. This protein has a weak ATPase activity. The chain is DNA mismatch repair protein MutS from Dechloromonas aromatica (strain RCB).